The sequence spans 70 residues: Phycocyanin-645 alpha-2 chain (70 aa).

Residue arginine 16 participates in (2R,3E)-phycocyanobilin binding. Residues cysteine 18, tyrosine 26, and lysine 41 each coordinate mesobiliverdin.

It belongs to the phycoerythrin family. As to quaternary structure, heterotetramer of 2 different alpha chains and 2 identical beta chains which form 2 alpha-beta heterodimers within the heterotetramer. In terms of processing, contains one phycocyanobilin chromophore, one mesobiliverdin chromophore and one 15,16-dihydrobiliverdin chromophore with binding mediated by both the alpha and beta subunits.

The protein resides in the plastid. The protein localises to the chloroplast thylakoid membrane. Its function is as follows. Light-harvesting photosynthetic tetrapyrrole chromophore-protein from the phycobiliprotein complex. The sequence is that of Phycocyanin-645 alpha-2 chain from Chroomonas sp.